The primary structure comprises 174 residues: FMN reductase (NADH) RutF (174 aa).

The protein belongs to the non-flavoprotein flavin reductase family. RutF subfamily.

It carries out the reaction FMNH2 + NAD(+) = FMN + NADH + 2 H(+). Functionally, catalyzes the reduction of FMN to FMNH2 which is used to reduce pyrimidine by RutA via the Rut pathway. The polypeptide is FMN reductase (NADH) RutF (Stutzerimonas stutzeri (strain A1501) (Pseudomonas stutzeri)).